Here is a 97-residue protein sequence, read N- to C-terminus: Secreted Ly-6/uPAR domain-containing protein 2 (97 aa).

A signal peptide spans 1-22 (MQFHTGLLLAAVLSLQLAAAQA). The 73-residue stretch at 23–95 (LWCHQCTGFG…IACCQTSLCN (73 aa)) folds into the UPAR/Ly6 domain. Intrachain disulfides connect Cys-25/Cys-47, Cys-28/Cys-34, Cys-40/Cys-68, Cys-72/Cys-88, and Cys-89/Cys-94.

Interacts with CHRNA3, CHRNA4, CHRNA5, CHRNA7, CHRNB2 and CHRNB4. Interacts with CHRM1 and CHRM3 probably in an allosteric manner.

It localises to the secreted. Binds and may modulate the functional properties of nicotinic and muscarinic acetylcholine receptors. May regulate keratinocytes proliferation, differentiation and apoptosis. In vitro moderately inhibits ACh-evoked currents of alpha-3:beta-2-containing nAChRs, strongly these of alpha-4:beta-2-containing nAChRs, modulates alpha-7-containing nAChRs, and inhibits nicotine-induced signaling probably implicating alpha-3:beta-4-containing nAChRs. Proposed to act on alpha-3:beta-2 and alpha-7 nAChRs in an orthosteric, and on mAChRs, such as CHRM1 and CHRM3, in an allosteric manner. The protein is Secreted Ly-6/uPAR domain-containing protein 2 of Macaca mulatta (Rhesus macaque).